A 513-amino-acid chain; its full sequence is Glycerol-3-phosphate dehydrogenase (513 aa).

16-44 (DVAVIGGGINGVGIAADAAGRGLSVFLCE) serves as a coordination point for FAD.

Belongs to the FAD-dependent glycerol-3-phosphate dehydrogenase family. FAD is required as a cofactor.

The protein localises to the cytoplasm. It carries out the reaction a quinone + sn-glycerol 3-phosphate = dihydroxyacetone phosphate + a quinol. The sequence is that of Glycerol-3-phosphate dehydrogenase (glpD) from Pseudomonas tolaasii.